The primary structure comprises 137 residues: Mediator of RNA polymerase II transcription subunit 21 (137 aa).

The disordered stretch occupies residues 37–56 (PKDTIAPSKADQPPEVDTLP). The stretch at 87–130 (GLDNSEQDQLQSIKELEEELNVAEKQRQEAVKEKDEVLVKLDQT) forms a coiled coil.

This sequence belongs to the Mediator complex subunit 21 family. Component of the Mediator complex.

It localises to the nucleus. Functionally, component of the Mediator complex, a coactivator involved in the regulated transcription of nearly all RNA polymerase II-dependent genes. Mediator functions as a bridge to convey information from gene-specific regulatory proteins to the basal RNA polymerase II transcription machinery. Mediator is recruited to promoters by direct interactions with regulatory proteins and serves as a scaffold for the assembly of a functional preinitiation complex with RNA polymerase II and the general transcription factors. The polypeptide is Mediator of RNA polymerase II transcription subunit 21 (srb-7) (Neurospora crassa (strain ATCC 24698 / 74-OR23-1A / CBS 708.71 / DSM 1257 / FGSC 987)).